A 947-amino-acid chain; its full sequence is Bifunctional glutamine synthetase adenylyltransferase/adenylyl-removing enzyme (947 aa).

Residues 1–443 (MQLPSSLVSV…VFETLIGDDE (443 aa)) are adenylyl removase. Residues 451–947 (ARHFHELWDM…VKQAWNQWFA (497 aa)) are adenylyl transferase.

Belongs to the GlnE family. It depends on Mg(2+) as a cofactor.

It catalyses the reaction [glutamine synthetase]-O(4)-(5'-adenylyl)-L-tyrosine + phosphate = [glutamine synthetase]-L-tyrosine + ADP. The catalysed reaction is [glutamine synthetase]-L-tyrosine + ATP = [glutamine synthetase]-O(4)-(5'-adenylyl)-L-tyrosine + diphosphate. In terms of biological role, involved in the regulation of glutamine synthetase GlnA, a key enzyme in the process to assimilate ammonia. When cellular nitrogen levels are high, the C-terminal adenylyl transferase (AT) inactivates GlnA by covalent transfer of an adenylyl group from ATP to specific tyrosine residue of GlnA, thus reducing its activity. Conversely, when nitrogen levels are low, the N-terminal adenylyl removase (AR) activates GlnA by removing the adenylyl group by phosphorolysis, increasing its activity. The regulatory region of GlnE binds the signal transduction protein PII (GlnB) which indicates the nitrogen status of the cell. This is Bifunctional glutamine synthetase adenylyltransferase/adenylyl-removing enzyme from Vibrio parahaemolyticus serotype O3:K6 (strain RIMD 2210633).